Consider the following 223-residue polypeptide: MSDICDANKLKYRFRGYFPVVIDVETAGFNSQTDALLEIAVTLLKMDNEGVIGIDKTLHFHIEPFEGANLEPEALAFNGIDPTNPLRGAVSEKEAFLEIFKAVKKAQKASDCHRSIIVAHNAAFDHGFVSKAIERCDLKRSPFHPFATFDTATLAGLAIGHTVLAKACIMAGIPFDNKEAHSALYDTERTAELFCHIVNRWKSLGGWPLLAVDEQDAQSGTEA.

The region spanning 20–194 (VVIDVETAGF…YDTERTAELF (175 aa)) is the Exonuclease domain. Positions 23, 25, 181, and 186 each coordinate Mg(2+). The active-site Proton donor/acceptor is the H181.

This sequence belongs to the RNase T family. As to quaternary structure, homodimer. The cofactor is Mg(2+).

Functionally, trims short 3' overhangs of a variety of RNA species, leaving a one or two nucleotide 3' overhang. Responsible for the end-turnover of tRNA: specifically removes the terminal AMP residue from uncharged tRNA (tRNA-C-C-A). Also appears to be involved in tRNA biosynthesis. In Shewanella baltica (strain OS185), this protein is Ribonuclease T.